A 313-amino-acid chain; its full sequence is L-lactate dehydrogenase 1 (313 aa).

NAD(+) contacts are provided by Val-15, Asp-36, Arg-41, and Tyr-66. Substrate-binding positions include Gln-83, Arg-89, and 121–124; that span reads NPVD. NAD(+) contacts are provided by residues 119 to 121 and Ser-144; that span reads ASN. 149–152 serves as a coordination point for substrate; sequence DTAR. Residues Arg-154 and His-169 each coordinate beta-D-fructose 1,6-bisphosphate. His-176 serves as the catalytic Proton acceptor. A Phosphotyrosine modification is found at Tyr-218. A substrate-binding site is contributed by Thr-227.

This sequence belongs to the LDH/MDH superfamily. LDH family. In terms of assembly, homotetramer.

The protein resides in the cytoplasm. It catalyses the reaction (S)-lactate + NAD(+) = pyruvate + NADH + H(+). It functions in the pathway fermentation; pyruvate fermentation to lactate; (S)-lactate from pyruvate: step 1/1. Its activity is regulated as follows. Allosterically activated by fructose 1,6-bisphosphate (FBP). Functionally, catalyzes the conversion of lactate to pyruvate. The protein is L-lactate dehydrogenase 1 of Listeria innocua serovar 6a (strain ATCC BAA-680 / CLIP 11262).